We begin with the raw amino-acid sequence, 205 residues long: Nitrophorin-4 (205 aa).

Residues 1 to 21 form the signal peptide; the sequence is MKSYTSLLAVAILCLFGGVNG. Intrachain disulfides connect cysteine 23-cysteine 143 and cysteine 62-cysteine 192. Residue histidine 80 participates in heme binding.

This sequence belongs to the calycin superfamily. Nitrophorin family. It depends on heme b as a cofactor. As to expression, salivary gland (at protein level).

Its subcellular location is the secreted. It carries out the reaction 3 nitrite + 2 H(+) = 2 nitric oxide + nitrate + H2O. Heme-based protein that delivers nitric oxide gas (NO) to the victim while feeding, resulting in vasodilation and inhibition of platelet aggregation. Reversibly binds nitric oxide (NO). Also binds tightly to histamine, which is released by the host to induce wound healing. NO release is pH dependent and linked to loop dynamics. The sequence is that of Nitrophorin-4 from Rhodnius prolixus (Triatomid bug).